The chain runs to 99 residues: Plastocyanin (99 aa).

The region spanning 1–99 (VEVLMGGSGG…IGMSGIVTVN (99 aa)) is the Plastocyanin-like domain. The Cu cation site is built by histidine 37, cysteine 84, histidine 87, and methionine 92.

The protein belongs to the plastocyanin family. It depends on Cu(2+) as a cofactor.

Its subcellular location is the plastid. The protein resides in the chloroplast thylakoid membrane. Functionally, participates in electron transfer between P700 and the cytochrome b6-f complex in photosystem I. The sequence is that of Plastocyanin (PETE) from Ginkgo biloba (Ginkgo).